The sequence spans 116 residues: C-C motif chemokine 6 (116 aa).

The first 21 residues, 1 to 21, serve as a signal peptide directing secretion; sequence MRNSKTAISFFILVAVLGSQA. 3 disulfides stabilise this stretch: Cys50-Cys73, Cys51-Cys89, and Cys60-Cys100.

The protein belongs to the intercrine beta (chemokine CC) family. The N-terminal is proteolytically cleaved by proteases associated with inflammatory responses. The processed forms CL6(22-95) and CCL6(23-95) show increase in CCR1-mediated signaling and chemotaxis assays in vitro. In terms of tissue distribution, expressed in myelopoietic bone marrow cultures stimulated by GM-CSF.

The protein resides in the secreted. In terms of biological role, chemotactic factor that attracts mostly macrophage, but it can also attract B cells, CD4(+) lymphocytes and eosinophils. The protein is C-C motif chemokine 6 (Ccl6) of Mus musculus (Mouse).